The following is a 701-amino-acid chain: 1,4-alpha-glucan branching enzyme GlgB (701 aa).

Catalysis depends on Asp-381, which acts as the Nucleophile. The active-site Proton donor is the Glu-434.

Belongs to the glycosyl hydrolase 13 family. GlgB subfamily. In terms of assembly, monomer.

The enzyme catalyses Transfers a segment of a (1-&gt;4)-alpha-D-glucan chain to a primary hydroxy group in a similar glucan chain.. Its pathway is glycan biosynthesis; glycogen biosynthesis. Catalyzes the formation of the alpha-1,6-glucosidic linkages in glycogen by scission of a 1,4-alpha-linked oligosaccharide from growing alpha-1,4-glucan chains and the subsequent attachment of the oligosaccharide to the alpha-1,6 position. The protein is 1,4-alpha-glucan branching enzyme GlgB of Jannaschia sp. (strain CCS1).